A 170-amino-acid chain; its full sequence is ATP synthase subunit b (170 aa).

A helical membrane pass occupies residues 22-41 (VLNWAVVVFGLYKFLPGFLG).

The protein belongs to the ATPase B chain family. As to quaternary structure, F-type ATPases have 2 components, F(1) - the catalytic core - and F(0) - the membrane proton channel. F(1) has five subunits: alpha(3), beta(3), gamma(1), delta(1), epsilon(1). F(0) has four main subunits: a(1), b(1), b'(1) and c(10-14). The alpha and beta chains form an alternating ring which encloses part of the gamma chain. F(1) is attached to F(0) by a central stalk formed by the gamma and epsilon chains, while a peripheral stalk is formed by the delta, b and b' chains.

Its subcellular location is the cellular thylakoid membrane. Functionally, f(1)F(0) ATP synthase produces ATP from ADP in the presence of a proton or sodium gradient. F-type ATPases consist of two structural domains, F(1) containing the extramembraneous catalytic core and F(0) containing the membrane proton channel, linked together by a central stalk and a peripheral stalk. During catalysis, ATP synthesis in the catalytic domain of F(1) is coupled via a rotary mechanism of the central stalk subunits to proton translocation. Its function is as follows. Component of the F(0) channel, it forms part of the peripheral stalk, linking F(1) to F(0). In Prochlorococcus marinus subsp. pastoris (strain CCMP1986 / NIES-2087 / MED4), this protein is ATP synthase subunit b.